The sequence spans 166 residues: Vasopressin-neurophysin 2-copeptin (166 aa).

A signal peptide spans 1-19; sequence MPDATLPACFLSLLAFTSA. A disulfide bond links C20 and C25. G28 is subject to Glycine amide. Disulfide bonds link C41–C85, C44–C58, C52–C75, C59–C65, C92–C104, C98–C116, and C105–C110. The N-linked (GlcNAc...) asparagine glycan is linked to N133.

It belongs to the vasopressin/oxytocin family. In terms of assembly, interacts with vasopressin receptors V1bR/AVPR1B (Ki=85 pM), V1aR/AVPR1A (Ki=0.6 nM) and V2R/AVPR2 (Ki=4.9 nM). Interacts with oxytocin receptor (OXTR) (Ki=110 nM).

Its subcellular location is the secreted. Functionally, neurophysin 2 specifically binds vasopressin. Its function is as follows. Vasopressin has a direct antidiuretic action on the kidney, it also causes vasoconstriction of the peripheral vessels. Acts by binding to vasopressin receptors (V1bR/AVPR1B, V1aR/AVPR1A, and V2R/AVPR2). The protein is Vasopressin-neurophysin 2-copeptin (AVP) of Bos taurus (Bovine).